A 443-amino-acid chain; its full sequence is Serine/threonine-protein phosphatase 2A 55 kDa regulatory subunit B beta isoform (443 aa).

WD repeat units lie at residues 22–61, 87–128, 171–209, and 220–260; these read TEAD…KNQV, EIEE…KRPE, AHTY…QSFN, and ELTE…CVTG. Serine 275 is modified (phosphoserine). 3 WD repeats span residues 279–317, 334–375, and 410–442; these read KLSS…RPIE, ENDC…DVTL, and DFSK…QDKV. Threonine 298 is modified (phosphothreonine).

This sequence belongs to the phosphatase 2A regulatory subunit B family. PP2A consists of a common heterodimeric core enzyme, composed of a 36 kDa catalytic subunit (subunit C) and a 65 kDa constant regulatory subunit (PR65 or subunit A), that associates with a variety of regulatory subunits. Proteins that associate with the core dimer include three families of regulatory subunits B (the R2/B/PR55/B55, R3/B''/PR72/PR130/PR59 and R5/B'/B56 families), the 48 kDa variable regulatory subunit, viral proteins, and cell signaling molecules. Interacts with TOMM22. Interacts with IER5 (via N- and C-terminal regions). As to expression, brain.

It is found in the cytoplasm. The protein resides in the cytoskeleton. The protein localises to the membrane. Functionally, the B regulatory subunit might modulate substrate selectivity and catalytic activity, and might also direct the localization of the catalytic enzyme to a particular subcellular compartment. This is Serine/threonine-protein phosphatase 2A 55 kDa regulatory subunit B beta isoform (PPP2R2B) from Sus scrofa (Pig).